The following is a 255-amino-acid chain: 4-diphosphocytidyl-2-C-methyl-D-erythritol kinase (255 aa).

The active site involves Lys-6. ATP is bound at residue 95–105 (PVCAGLGGGSS). Asp-137 is a catalytic residue.

Belongs to the GHMP kinase family. IspE subfamily.

It carries out the reaction 4-CDP-2-C-methyl-D-erythritol + ATP = 4-CDP-2-C-methyl-D-erythritol 2-phosphate + ADP + H(+). It participates in isoprenoid biosynthesis; isopentenyl diphosphate biosynthesis via DXP pathway; isopentenyl diphosphate from 1-deoxy-D-xylulose 5-phosphate: step 3/6. Catalyzes the phosphorylation of the position 2 hydroxy group of 4-diphosphocytidyl-2C-methyl-D-erythritol. The polypeptide is 4-diphosphocytidyl-2-C-methyl-D-erythritol kinase (Campylobacter jejuni subsp. jejuni serotype O:6 (strain 81116 / NCTC 11828)).